The chain runs to 611 residues: Exonuclease V, mitochondrial (611 aa).

Residues 19-42 form a disordered region; it reads VTSEHEQVQSISKEESRSLSSNDL. A compositionally biased stretch (basic and acidic residues) spans 21 to 35; it reads SEHEQVQSISKEESR. Positions 147, 569, 572, and 578 each coordinate [4Fe-4S] cluster.

It belongs to the EXO5 family. In terms of assembly, monomer. It depends on Mg(2+) as a cofactor. The cofactor is [4Fe-4S] cluster.

It is found in the mitochondrion. Its function is as follows. Single strand DNA specific 5'exonuclease involved in mitochondrial DNA replication and recombination. Releases dinucleotides as main products of catalysis. Has the capacity to slide across 5'double-stranded DNA or 5'RNA sequences and resumes cutting two nucleotides downstream of the double-stranded-to-single-stranded junction or RNA-to-DNA junction, respectively. This Candida albicans (strain WO-1) (Yeast) protein is Exonuclease V, mitochondrial (EXO5).